The chain runs to 61 residues: DNA-directed RNA polymerase subunit 12-like protein (61 aa).

Zn(2+)-binding residues include Cys-21, Cys-24, Cys-38, and Cys-41.

This sequence belongs to the archaeal Rpo12/eukaryotic RPC10 RNA polymerase subunit family.

Its subcellular location is the nucleus. This is DNA-directed RNA polymerase subunit 12-like protein (NRPB12L) from Arabidopsis thaliana (Mouse-ear cress).